The sequence spans 143 residues: Transcriptional regulator MraZ (143 aa).

SpoVT-AbrB domains follow at residues 5-47 (TYTP…PREE) and 76-119 (TDEQ…DAQA).

It belongs to the MraZ family. As to quaternary structure, forms oligomers.

The protein resides in the cytoplasm. It is found in the nucleoid. This is Transcriptional regulator MraZ from Rhodococcus opacus (strain B4).